An 897-amino-acid chain; its full sequence is 3'-5' exonuclease DinG (897 aa).

The region spanning 8-161 is the Exonuclease domain; sequence VVDLETTGNQ…DEDAATTAKL (154 aa). The 256-residue stretch at 241–496 folds into the Helicase ATP-binding domain; sequence SKAVDQLGLT…KAIDQLEKQR (256 aa). Residue 276–283 coordinates ATP; that stretch reads ASLGSGKS. Residues 448–451 carry the DEAH box motif; it reads DEAH. Positions 703-893 constitute a Helicase C-terminal domain; it reads NIDEYVASIV…QFGKLLRQIQ (191 aa).

Belongs to the helicase family. DinG subfamily. Type 2 sub-subfamily. As to quaternary structure, monomer in solution.

With respect to regulation, the nuclease activity is inhibited by ATP or ADP. Functionally, 3'-5' exonuclease acting on single-stranded DNA (ssDNA) and RNA (ssRNA) substrates. Displays ssDNA-stimulated ATPase activity, but lacks helicase activity. The polypeptide is 3'-5' exonuclease DinG (Staphylococcus aureus (strain MRSA252)).